A 1948-amino-acid polypeptide reads, in one-letter code: Chromodomain-helicase-DNA-binding protein 5 (1948 aa).

Disordered regions lie at residues 1–136 (MRGP…SGQL), 228–268 (SPQQ…GRGK), and 281–336 (SKRK…GDGY). Composition is skewed to acidic residues over residues 17 to 37 (EEMENEEEMSEEEDGGLEGFE) and 71 to 89 (NDELSENEEDLEEKSESEG). Basic residues-rich tracts occupy residues 95-114 (TKKKKKKLKEKKEKKAKRKK) and 250-268 (GVRKKNKGAKDSKKKGRGK). The segment covering 289-299 (SEEDEPEDSDL) has biased composition (acidic residues). Positions 319–328 (KKNKRRRKKK) are enriched in basic residues. PHD-type zinc fingers lie at residues 341-388 (QDYC…CEKE) and 414-461 (MEFC…CTCP). Residues 341–651 (QDYCEVCQQG…HRELMLGEDA (311 aa)) are histone-binding. In terms of domain architecture, Chromo 1 spans 495–552 (MPPPRPLEGIPEREFFVKWAGLSYWHCSWVKELQLELYHTVMYRNYQRKNDMDEPPPF). Residues 547–569 (DEPPPFDYGSGDEDGKSEKRKNK) form a disordered region. Over residues 559–569 (EDGKSEKRKNK) the composition is skewed to basic and acidic residues. One can recognise a Chromo 2 domain in the interval 590–651 (MMVHRILNHS…HRELMLGEDA (62 aa)). One can recognise a Helicase ATP-binding domain in the interval 710-894 (RFSWAQGTDT…FHLLNFLTPE (185 aa)). 723-730 (DEMGLGKT) serves as a coordination point for ATP. Residues 845 to 848 (DEAH) carry the DEAH box motif. In terms of domain architecture, Helicase C-terminal spans 1026–1191 (LLQKMLKKLR…MTKQELDDIL (166 aa)). Disordered stretches follow at residues 1206–1250 (MMSQ…VEDS), 1349–1409 (YNDA…LPPL), 1521–1566 (KYST…LPDK), and 1595–1692 (TALD…EDKN). Acidic residues-rich tracts occupy residues 1353-1364 (SQEDQEWQDELS) and 1374-1383 (SEDEDEDFEE). Q1388 carries the N5-methylglutamine modification. The segment covering 1547–1561 (TPVPASPAQLPPAPL) has biased composition (pro residues). S1552 carries the phosphoserine modification. 3 stretches are compositionally biased toward basic and acidic residues: residues 1598–1625 (DRVEAEDKHQSSDSKDRAREERMEEVEK), 1633–1650 (PLKEETLPDKEPVPDKLE), and 1657–1672 (NDFRPDDPKAEEKEPT).

The protein belongs to the SNF2/RAD54 helicase family. In terms of assembly, component of the nucleosome remodeling and deacetylase (NuRD) repressor complex, composed of core proteins MTA1, MTA2, MTA3, RBBP4, RBBP7, HDAC1, HDAC2, MBD2, MBD3, and peripherally associated proteins CDK2AP1, CDK2AP2, GATAD2A, GATAD2B, CHD3, CHD4 and CHD5. The exact stoichiometry of the NuRD complex is unknown, and some subunits such as MBD2 and MBD3, GATAD2A and GATAD2B, and CHD3, CHD4 and CHD5 define mutually exclusive NuRD complexes. Interacts with HDAC2. Post-translationally, methylated at Gln-1388 by N6AMT1. As to expression, expressed in brain regions enriched in neurons and not in regions rich in glial cells (at protein level).

The protein localises to the nucleus. The protein resides in the chromosome. The catalysed reaction is ATP + H2O = ADP + phosphate + H(+). ATP-dependent chromatin-remodeling factor that binds DNA through histones and regulates gene transcription. May specifically recognize and bind trimethylated 'Lys-27' (H3K27me3) and non-methylated 'Lys-4' of histone H3. Acts as a component of the histone deacetylase NuRD complex which participates in the remodeling of chromatin. Plays a role in the development of the nervous system by activating the expression of genes promoting neuron terminal differentiation. In parallel, it may also positively regulate the trimethylation of histone H3 at 'Lys-27' thereby specifically repressing genes that promote the differentiation into non-neuronal cell lineages. Regulates the expression of genes involved in cell proliferation and differentiation. Downstream activated genes may include CDKN2A that positively regulates the p53/TP53 pathway, which in turn, prevents cell proliferation. In spermatogenesis, it probably regulates histone hyperacetylation and the replacement of histones by transition proteins in chromatin, a crucial step in the condensation of spermatid chromatin and the production of functional spermatozoa. The polypeptide is Chromodomain-helicase-DNA-binding protein 5 (Chd5) (Rattus norvegicus (Rat)).